Reading from the N-terminus, the 536-residue chain is Probable 1,4-beta-D-glucan cellobiohydrolase B (536 aa).

The N-terminal stretch at 1–21 is a signal peptide; the sequence is MSSFQVYRAALLLSILATANA. Residues 22–458 are catalytic; it reads QQVGTYTTET…SNIKFGPIGS (437 aa). Glu-233 acts as the Nucleophile in catalysis. Glu-238 serves as the catalytic Proton donor. Asn-351 and Asn-414 each carry an N-linked (GlcNAc...) asparagine glycan. The segment at 459-500 is ser/Thr-rich linker; it reads TYSSGSSSGSGSSSSSSSTTTKATSTTLKTTSTTSSGSSSTS. The disordered stretch occupies residues 464 to 499; the sequence is SSSGSGSSSSSSSTTTKATSTTLKTTSTTSSGSSST. The CBM1 domain occupies 500 to 536; that stretch reads SAAQAYGQCGGQGWTGPTTCVSGYTCTYENAYYSQCL. Intrachain disulfides connect Cys-508-Cys-525 and Cys-519-Cys-535.

It belongs to the glycosyl hydrolase 7 (cellulase C) family.

It localises to the secreted. It carries out the reaction Hydrolysis of (1-&gt;4)-beta-D-glucosidic linkages in cellulose and cellotetraose, releasing cellobiose from the non-reducing ends of the chains.. Functionally, the biological conversion of cellulose to glucose generally requires three types of hydrolytic enzymes: (1) Endoglucanases which cut internal beta-1,4-glucosidic bonds; (2) Exocellobiohydrolases that cut the disaccharide cellobiose from the non-reducing end of the cellulose polymer chain; (3) Beta-1,4-glucosidases which hydrolyze the cellobiose and other short cello-oligosaccharides to glucose. The protein is Probable 1,4-beta-D-glucan cellobiohydrolase B (cbhB) of Aspergillus niger (strain ATCC MYA-4892 / CBS 513.88 / FGSC A1513).